The sequence spans 219 residues: uncharacterized protein (219 aa).

An RRM domain is found at 30–107 (FRLFVGNLGN…RPVKLSRATS (78 aa)). Residues 140-149 (KKIKNKHGKN) show a composition bias toward basic residues. The interval 140–219 (KKIKNKHGKN…YSRASSFRRV (80 aa)) is disordered. A compositionally biased stretch (low complexity) spans 150–169 (SSKSSRAAQSAAAELISSSS). The span at 176–186 (ANSTSVPNAVN) shows a compositional bias: polar residues.

This is an uncharacterized protein from Schizosaccharomyces pombe (strain 972 / ATCC 24843) (Fission yeast).